The primary structure comprises 274 residues: 4-hydroxy-tetrahydrodipicolinate reductase (274 aa).

NAD(+) is bound by residues 8–13 (GALGRM), Glu34, 102–104 (GTT), and 128–131 (SQNF). The active-site Proton donor/acceptor is His160. His161 serves as a coordination point for (S)-2,3,4,5-tetrahydrodipicolinate. The active-site Proton donor is the Lys164. 170–171 (GT) contacts (S)-2,3,4,5-tetrahydrodipicolinate.

The protein belongs to the DapB family.

Its subcellular location is the cytoplasm. The catalysed reaction is (S)-2,3,4,5-tetrahydrodipicolinate + NAD(+) + H2O = (2S,4S)-4-hydroxy-2,3,4,5-tetrahydrodipicolinate + NADH + H(+). It catalyses the reaction (S)-2,3,4,5-tetrahydrodipicolinate + NADP(+) + H2O = (2S,4S)-4-hydroxy-2,3,4,5-tetrahydrodipicolinate + NADPH + H(+). It functions in the pathway amino-acid biosynthesis; L-lysine biosynthesis via DAP pathway; (S)-tetrahydrodipicolinate from L-aspartate: step 4/4. In terms of biological role, catalyzes the conversion of 4-hydroxy-tetrahydrodipicolinate (HTPA) to tetrahydrodipicolinate. In Methanocaldococcus jannaschii (strain ATCC 43067 / DSM 2661 / JAL-1 / JCM 10045 / NBRC 100440) (Methanococcus jannaschii), this protein is 4-hydroxy-tetrahydrodipicolinate reductase.